The chain runs to 792 residues: Phenylalanine--tRNA ligase beta subunit (792 aa).

One can recognise a tRNA-binding domain in the interval 39-147 (GESLGQVVVA…DDAPVGQALA (109 aa)). The region spanning 400–475 (PQPARILLRR…RIHGYDRVPT (76 aa)) is the B5 domain. Mg(2+)-binding residues include D453, D459, E462, and D463. One can recognise an FDX-ACB domain in the interval 698–791 (SRFPSVRRDL…IEREHRARIR (94 aa)).

It belongs to the phenylalanyl-tRNA synthetase beta subunit family. Type 1 subfamily. In terms of assembly, tetramer of two alpha and two beta subunits. The cofactor is Mg(2+).

Its subcellular location is the cytoplasm. It carries out the reaction tRNA(Phe) + L-phenylalanine + ATP = L-phenylalanyl-tRNA(Phe) + AMP + diphosphate + H(+). The protein is Phenylalanine--tRNA ligase beta subunit of Xanthomonas oryzae pv. oryzae (strain MAFF 311018).